We begin with the raw amino-acid sequence, 432 residues long: 5-hydroxybenzimidazole synthase BzaA (432 aa).

Residues M95, Y124, H163, 185-187, and 226-229 each bind substrate; these read SYG and DGMR. H269 provides a ligand contact to Zn(2+). F292 provides a ligand contact to substrate. H333 provides a ligand contact to Zn(2+). [4Fe-4S] cluster is bound by residues C409, C412, and C416.

Belongs to the ThiC family. 5-hydroxybenzimidazole synthase subfamily. It depends on [4Fe-4S] cluster as a cofactor.

It catalyses the reaction 5-amino-1-(5-phospho-beta-D-ribosyl)imidazole + AH2 + S-adenosyl-L-methionine = 5-hydroxybenzimidazole + 5'-deoxyadenosine + formate + L-methionine + A + NH4(+) + phosphate + 2 H(+). In terms of biological role, together with BzaB, probably catalyzes the conversion of aminoimidazole ribotide (AIR) to 5-hydroxybenzimidazole (5-HBI) in a radical S-adenosyl-L-methionine (SAM)-dependent reaction. Is thus involved in the anaerobic biosynthesis of the benzimidazole lower axial ligand of the cobamide produced by M.thermoacetica. Requires BzaB for catalytic activity, as BzaA alone displays no activity. In Moorella thermoacetica (strain ATCC 39073 / JCM 9320), this protein is 5-hydroxybenzimidazole synthase BzaA.